The sequence spans 977 residues: Protein bric-a-brac 1 (977 aa).

Residues 1 to 97 form a disordered region; the sequence is MASAQAETNV…RSSSVASPSS (97 aa). A compositionally biased stretch (polar residues) spans 34-43; it reads PKSNRSSPTQ. Residues 44 to 69 are compositionally biased toward basic and acidic residues; it reads QEEKRIKSEDRTSPTGGAKDEDKESQ. Low complexity predominate over residues 80–97; that stretch reads SPVSSPQGRSSSVASPSS. In terms of domain architecture, BTB spans 127 to 192; that stretch reads VDVTLACDGR…MYRGEINVSQ (66 aa). 4 disordered regions span residues 221 to 249, 281 to 348, 362 to 434, and 447 to 497; these read AAAAAASSERMPSSPKESTSTSRTEHDRE, ERQQ…GSTV, DMPS…RFPL, and SGLG…ADDL. Positions 316-330 are enriched in basic and acidic residues; it reads ERMELEQKERERQRD. Over residues 372-396 the composition is skewed to low complexity; sequence PLSRSSRPHSQSPQQQQAQQQGQLP. The span at 469–491 shows a compositional bias: gly residues; it reads GGGVGGGGVGGGGAGGVGSGGGS. An HTH psq-type domain is found at 559-611; sequence FRERGPLKSWRPETMAEAIFSVLKEGLSLSQAARKYDIPYPTFVLYANRVHNM. The H-T-H motif DNA-binding region spans 569–614; the sequence is RPETMAEAIFSVLKEGLSLSQAARKYDIPYPTFVLYANRVHNMLGP. The a.T hook DNA-binding region spans 621 to 632; that stretch reads DLRPKGRGRPQR. Disordered stretches follow at residues 772 to 900 and 925 to 977; these read ASIS…LGDL and VGAS…TTSE. 4 stretches are compositionally biased toward low complexity: residues 804–816, 838–853, 862–872, and 925–966; these read MAVALHHQQQQQA, QQQQQQQQQHHQGGHQ, ASSSSSASSSS, and VGAS…SSGG.

Leg imaginal disk at the central region of the tarsus and in eye antenna disk at the basal cylinder.

The protein resides in the nucleus. Functionally, probably acts as a transcriptional regulator. Required for the specification of the tarsal segment. Also involved in antenna development. The protein is Protein bric-a-brac 1 (bab1) of Drosophila melanogaster (Fruit fly).